The following is a 387-amino-acid chain: Migration and invasion-inhibitory protein (387 aa).

Positions 50–59 (NLEMPLSQET) are enriched in polar residues. Disordered stretches follow at residues 50–80 (NLEMPLSQETSSASSVAPSSQDKRHMLDPLD) and 133–172 (VSLGGPKGLGPDKTQVPRSILSRLSKPSKPRVTSQESAVP). Residues 60–69 (SSASSVAPSS) are compositionally biased toward low complexity. Positions 70-80 (QDKRHMLDPLD) are enriched in basic and acidic residues. At S307 the chain carries Phosphoserine.

As to quaternary structure, interacts with IGFBP2.

Inhibits glioma cells invasion and down-regulates adhesion- and motility-associated genes such as NFKB2 and ICAM1. Exhibits opposing effects to IGFBP2 on cell invasion. The chain is Migration and invasion-inhibitory protein (Miip) from Mus musculus (Mouse).